Reading from the N-terminus, the 338-residue chain is MSRQPILDIKGLRTVFRTRAREIVAVNDVDIVVNPGETVALVGESGSGKSVTSLSIMRLLARKVGFIDAGSIILRGKSGQTVDLAAIDEEAMRRIRGNDIGMVFQEPMTSLNPVYTIGDQIGEPLRVHRGTSRREALEAAVELLDRVGIPDARRRAGQYPHELSGGMRQRATIAMALICNPTLLIADEPTTALDVTIQAQILDLMQKLQSESGMGMLFVTHNLGVVAEIAQRVVVMYAGRIVESGPVKEVFRNPRHPYTMGLLRSMPRLGDATEMKRRGEKLNTIPGMVPGLANLPSGCAFAPRCSFAVEACHAAVPPLASVNKHHGSRCIRWQEIAA.

The ABC transporter domain occupies 10–263; the sequence is KGLRTVFRTR…PRHPYTMGLL (254 aa). 43 to 50 is a binding site for ATP; it reads GESGSGKS.

The protein belongs to the ABC transporter superfamily. In terms of assembly, the complex is composed of two ATP-binding proteins (BMEII0863 and BMEII0864), two transmembrane proteins (BMEII0860 and BMEII0861) and a solute-binding protein (BMEII0859).

Its subcellular location is the cell inner membrane. Functionally, probably part of an ABC transporter complex that could be involved in peptide import. Probably responsible for energy coupling to the transport system. This Brucella melitensis biotype 1 (strain ATCC 23456 / CCUG 17765 / NCTC 10094 / 16M) protein is Putative peptide import ATP-binding protein BMEII0863.